The primary structure comprises 120 residues: MLKFTAEHEWLELDGDVATVGITTYAVEQLGDLVFVELPEVGKSFSKNDDAATVESVKAASEVYCPLDGEITAVNDAIVADPSLINSDPQGAGWFFKLKLKNRADADGLLDEAAYKELIA.

The 83-residue stretch at 17–99 (VATVGITTYA…QGAGWFFKLK (83 aa)) folds into the Lipoyl-binding domain. An N6-lipoyllysine modification is found at Lys-58.

It belongs to the GcvH family. As to quaternary structure, the glycine cleavage system is composed of four proteins: P, T, L and H. (R)-lipoate is required as a cofactor.

The glycine cleavage system catalyzes the degradation of glycine. The H protein shuttles the methylamine group of glycine from the P protein to the T protein. The chain is Glycine cleavage system H protein from Rhizobium etli (strain CIAT 652).